Here is a 257-residue protein sequence, read N- to C-terminus: Global transcriptional regulator CodY (257 aa).

A GAF domain region spans residues 1–155 (MSLLSKTREL…AATVLGMEIL (155 aa)). The segment at residues 203–222 (ASKVADRVGITRSVIVNALR) is a DNA-binding region (H-T-H motif).

The protein belongs to the CodY family.

Its subcellular location is the cytoplasm. DNA-binding global transcriptional regulator which is involved in the adaptive response to starvation and acts by directly or indirectly controlling the expression of numerous genes in response to nutrient availability. During rapid exponential growth, CodY is highly active and represses genes whose products allow adaptation to nutrient depletion. This is Global transcriptional regulator CodY from Staphylococcus carnosus (strain TM300).